A 411-amino-acid chain; its full sequence is MTNKTWGGRFKKSLDSSVNQFNASLSFDHVLFDQDINGSQVHVKQLAKQKILTEAECQEIYSALEEIRTEIKQGQYSFNERDEEDIHMFIEQLLIQKIGDLGKKLHTGRSRNDQVALDLRLYTRDKGCLINELLTRLIDCLDDLTSKHQQDLMPGYTHLQQAQPVTLGAYFNAYQCMFSRDKSRLEDWFKRMNYSPLGAGALAGSTLPLDREWVAESLGFAGIIPNTLDAVSDRDFVIELCSVAAMIMMHLSRLCEDLILWSTQEFNFVTLDDAFATGSSLMPNKKNPDVPELIRGKSGRVYGHLMAILTVMKGLPLAYNKDMQEDKEGLFDTINTIIVCLQMITPFLQSLTFNTPLMRTKAQSGYLDATAILESLVMKGMPFRDAHHQVGAWIAEAIEKQCSLNELLKGG.

The protein belongs to the lyase 1 family. Argininosuccinate lyase subfamily.

The protein localises to the cytoplasm. It carries out the reaction 2-(N(omega)-L-arginino)succinate = fumarate + L-arginine. The protein operates within amino-acid biosynthesis; L-arginine biosynthesis; L-arginine from L-ornithine and carbamoyl phosphate: step 3/3. The protein is Argininosuccinate lyase of Legionella pneumophila subsp. pneumophila (strain Philadelphia 1 / ATCC 33152 / DSM 7513).